Here is a 207-residue protein sequence, read N- to C-terminus: 3-demethoxyubiquinol 3-hydroxylase (207 aa).

6 residues coordinate Fe cation: glutamate 56, glutamate 86, histidine 89, glutamate 138, glutamate 170, and histidine 173.

The protein belongs to the COQ7 family. The cofactor is Fe cation.

It is found in the cell membrane. It carries out the reaction a 5-methoxy-2-methyl-3-(all-trans-polyprenyl)benzene-1,4-diol + AH2 + O2 = a 3-demethylubiquinol + A + H2O. It participates in cofactor biosynthesis; ubiquinone biosynthesis. In terms of biological role, catalyzes the hydroxylation of 2-nonaprenyl-3-methyl-6-methoxy-1,4-benzoquinol during ubiquinone biosynthesis. The chain is 3-demethoxyubiquinol 3-hydroxylase from Cupriavidus pinatubonensis (strain JMP 134 / LMG 1197) (Cupriavidus necator (strain JMP 134)).